Consider the following 459-residue polypeptide: Cysteine desulfurase (459 aa).

A mitochondrion-targeting transit peptide spans methionine 1–arginine 17. The pyridoxal 5'-phosphate site is built by alanine 129, threonine 130, glutamine 237, serine 257, and histidine 259. Lysine 260 bears the N6-(pyridoxal phosphate)lysine mark. Residue threonine 297 participates in pyridoxal 5'-phosphate binding. Residue cysteine 383 is the Cysteine persulfide intermediate of the active site. Residue cysteine 383 participates in [2Fe-2S] cluster binding. Cysteine 383 provides a ligand contact to Zn(2+). Cysteine 383 is modified (cysteine persulfide).

Belongs to the class-V pyridoxal-phosphate-dependent aminotransferase family. NifS/IscS subfamily. As to quaternary structure, homodimer. Component of the mitochondrial core iron-sulfur cluster (ISC) complex composed of NFS1, LYRM4, NDUFAB1, ISCU, FXN, and FDX2; this complex is a heterohexamer containing two copies of each monomer. Component of cyteine desulfurase complex composed of NFS1, LYRM4 and NDUFAB1; this complex contributes to the activation of cysteine desulfurase activity and NFS1 stabilization. Interacts (homodimer form) with ISCU (D-state); each monomer interacts with the C-terminal regions of each NFS1 monomer. Interacts with HSPA9. Interacts (via homodimer form) with FDX2. Interacts (via homodimer form) with FXN. Interacts with LYRM4. Component of a complex composed of FXN, NFS1, LYRM4 and ISCU. The cofactor is pyridoxal 5'-phosphate. Post-translationally, N-gluconoylated. In terms of processing, cysteine persulfide intermediate is reduced by thiol-containing molecules like glutathione and L-cysteine. Persulfide reduction is a rate-limiting step of cysteine desulfurase catalytic cycle. In terms of tissue distribution, ubiquitous.

The protein resides in the mitochondrion. It carries out the reaction (sulfur carrier)-H + L-cysteine = (sulfur carrier)-SH + L-alanine. The enzyme catalyses L-cysteinyl-[cysteine desulfurase] + L-cysteine = S-sulfanyl-L-cysteinyl-[cysteine desulfurase] + L-alanine. With respect to regulation, active only in complex with LYRM4. In terms of biological role, mitochondrial cysteine desulfurase, of the core iron-sulfur cluster (ISC) assembly complex, that catalyzes the desulfuration of L-cysteine to L-alanine, as component of the cysteine desulfurase complex, leading to the formation of a cysteine persulfide intermediate at the active site cysteine residue and participates in the [2Fe-2S] clusters assembly on the scaffolding protein ISCU. The persulfide is then transferred on the flexible Cys loop from the catalytic site of NFS1 to the surface of NFS1. After the NFS1-linked persulfide sulfur is transferred to one of the conserved Cys residues of the scaffold, a reaction assisted by FXN. The core iron-sulfur cluster (ISC) assembly complex is involved in the de novo synthesis of a [2Fe-2S] cluster, the first step of the mitochondrial iron-sulfur protein biogenesis. This process is initiated by the cysteine desulfurase complex (NFS1:LYRM4:NDUFAB1) that produces persulfide which is delivered on the scaffold protein ISCU in a FXN-dependent manner. Then this complex is stabilized by FDX2 which provides reducing equivalents to accomplish the [2Fe-2S] cluster assembly. Finally, the [2Fe-2S] cluster is transferred from ISCU to chaperone proteins, including HSCB, HSPA9 and GLRX5. In Mus musculus (Mouse), this protein is Cysteine desulfurase.